Reading from the N-terminus, the 432-residue chain is Transcriptional adapter 3 (432 aa).

A Glycyl lysine isopeptide (Lys-Gly) (interchain with G-Cter in SUMO2) cross-link involves residue Lys21. Positions 40 to 69 (IEELDTLQLELETLLSSASRRLRVLEAETQ) form a coiled coil. The disordered stretch occupies residues 87–126 (GRDHELGAPPKHGKPKKQKLEGKAGHGPGPGPGRPKSKNL). Residue Lys129 forms a Glycyl lysine isopeptide (Lys-Gly) (interchain with G-Cter in SUMO2) linkage. A disordered region spans residues 272 to 319 (NIISPMEDSPIPDMSGKESGADGASTSPRNQNKPFSVPHTKSLESRIK). Residues Ser280 and Ser298 each carry the phosphoserine modification. Positions 295-305 (ASTSPRNQNKP) are enriched in polar residues. A coiled-coil region spans residues 367–407 (LLRLAKEEVSRQELRQRVRMADNEVMDAFRKIMAARQKKRT). Position 418 is an N6-acetyllysine (Lys418).

This sequence belongs to the NGG1 family. The PCAF complex is composed of a number of TBP-associated factors (TAFS), such as TAF5, TAF5L, TAF6, TAF6L, TAF9, TAF10 and TAF12, PCAF, and also PCAF-associated factors (PAFs), such as TADA2L/ADA2, TADA3L/ADA3 and SPT3. Interacts directly with TADA2L and PCAF and also with the high-risk HPV oncoprotein E6. Component of the STAGA transcription coactivator-HAT complex, at least composed of SUPT3H, GCN5L2, TAF5L, TAF6L, SUPT7L, TADA3L, TAD1L, TAF10, TAF12, TRRAP and TAF9. Component of the TFTC-HAT complex. Component of the ADA2A-containing complex (ATAC), composed of KAT14, KAT2A, TADA2L, TADA3L, ZZ3, MBIP, WDR5, YEATS2, CCDC101 and DR1. As to expression, ubiquitously expressed.

The protein localises to the nucleus. Functionally, functions as a component of the PCAF complex. The PCAF complex is capable of efficiently acetylating histones in a nucleosomal context. The PCAF complex could be considered as the human version of the yeast SAGA complex. Also known as a coactivator for p53/TP53-dependent transcriptional activation. Component of the ATAC complex, a complex with histone acetyltransferase activity on histones H3 and H4. The protein is Transcriptional adapter 3 (TADA3) of Homo sapiens (Human).